The chain runs to 364 residues: MSNDSFFNNDWLELQRKYWDSWSEMGRKAMGLENQQTLTTPWEGALDHWWKAMSPATPDFSKTFMEKMMEQGKNFFRMAETFANTPEDTTATNGLTWWTKALEDMQKQFSGSLDDGGNSMQRMMSFWELPIDNWQRMMSSMSPMPGDMLRNMPHEQLKDRSGRALSAPGLGYTREEQSQYHQLTRTAMDYQAALQEYTGFYSQLGMKSVERMGDFIQGVIDSGKSIDSARTLYDNWISCCETVYAAEVATPEYAQIHGRLVNAQMALKRRMAIMVDENLGAMNMPTRSELRTLQDRLQETRRDNKQLHRALHALEKQVAALSGKTPTTALKAPAPATKATEKPATRATTRRKTAAKPTGGTADD.

The disordered stretch occupies residues 322–364 (SGKTPTTALKAPAPATKATEKPATRATTRRKTAAKPTGGTADD). Low complexity predominate over residues 324–338 (KTPTTALKAPAPATK).

This sequence belongs to the PHA/PHB synthase family. Type III PhaE subfamily. Forms a heterodimer with PhaC, which may multimerize in the presence of 3-hydroxybutyryl-CoA.

It is found in the cytoplasm. The protein operates within biopolymer metabolism; poly-(R)-3-hydroxybutanoate biosynthesis. In terms of biological role, polymerizes D(-)-3-hydroxybutyryl-CoA to create polyhydroxybutyrate (PHB) which consists of thousands of hydroxybutyrate molecules linked end to end. This subunit has no catalytic activity but enhances the activity of PhaC, the catalytic subunit. This chain is Poly(3-hydroxyalkanoate) polymerase subunit PhaE, found in Thiocystis violacea.